The primary structure comprises 399 residues: MQERHLFTSESVSEGHPDKIADQISDAILDAMLEQDPQARVACETTVTTGLVLVVGEISTTAYVDIQKVVRETIKKIGYRDGQYGFDGDNCAVIVALDEQSPDIAQGVDDSLESREKDEDPLDKIGAGDQGLMFGFAVDQTPELMPLPIALSHRLMRKVAELRKSGQLAYLRPDAKAQVTVEYDENEQPKRVDTVVISTQHDEDVTLETIQKDMLEQVIKTVIPAEYLDDKTKYFINPTGRFVIGGPQGDSGLTGRKIIVDTYGGYARHGGGAFSGKDATKVDRSASYAARYIAKNIVAAGLARKCEVQLAYAIGVAQPVSVSVNTFETGTVSEEAIQTAIRENFDLRPAGIIKMLDLQRPIYKQTAAYGHFGRTDVDLSWERLDKVDALKASIAKLNH.

Histidine 16 is a binding site for ATP. Mg(2+) is bound at residue aspartate 18. Residue glutamate 44 coordinates K(+). L-methionine is bound by residues glutamate 57 and glutamine 100. The segment at 100–110 (QSPDIAQGVDD) is flexible loop. Residues 174 to 176 (DAK), 241 to 242 (RF), aspartate 250, 256 to 257 (RK), alanine 273, and lysine 277 each bind ATP. Aspartate 250 provides a ligand contact to L-methionine. Lysine 281 contacts L-methionine.

Belongs to the AdoMet synthase family. In terms of assembly, homotetramer; dimer of dimers. Mg(2+) is required as a cofactor. It depends on K(+) as a cofactor.

It localises to the cytoplasm. The enzyme catalyses L-methionine + ATP + H2O = S-adenosyl-L-methionine + phosphate + diphosphate. The protein operates within amino-acid biosynthesis; S-adenosyl-L-methionine biosynthesis; S-adenosyl-L-methionine from L-methionine: step 1/1. Its function is as follows. Catalyzes the formation of S-adenosylmethionine (AdoMet) from methionine and ATP. The overall synthetic reaction is composed of two sequential steps, AdoMet formation and the subsequent tripolyphosphate hydrolysis which occurs prior to release of AdoMet from the enzyme. The protein is S-adenosylmethionine synthase of Latilactobacillus sakei subsp. sakei (strain 23K) (Lactobacillus sakei subsp. sakei).